A 236-amino-acid polypeptide reads, in one-letter code: DNA repair protein RecO (236 aa).

Belongs to the RecO family.

Its function is as follows. Involved in DNA repair and RecF pathway recombination. This is DNA repair protein RecO from Haemophilus influenzae (strain 86-028NP).